The sequence spans 662 residues: Probable quinol oxidase subunit 1 (662 aa).

2 helical membrane-spanning segments follow: residues 14–34 and 58–78; these read WMIT…IAVI and LMYL…ALLL. His-102 is a Fe(II)-heme a binding site. Helical transmembrane passes span 103-123, 140-160, 187-207, 228-248, 273-293, 311-331, 336-356, and 376-396; these read GVIM…NVVV, ISFW…IIGG, VAIQ…FVTI, FITT…LALM, FFWV…FGIY, MVWA…HHFF, GALI…PTGV, and MLFS…GVML. Residues His-279, Tyr-283, His-328, and His-329 each coordinate Cu cation. The segment at residues 279–283 is a cross-link (1'-histidyl-3'-tyrosine (His-Tyr)); the sequence is HPEVY. Residue His-414 coordinates heme a3. 5 helical membrane-spanning segments follow: residues 415 to 435, 451 to 471, 492 to 512, 586 to 605, and 609 to 628; these read FHYT…IFWY, CFWL…ILGL, VIST…VVSI, THTG…FLIF, and IPAA…QSFV. His-416 is a binding site for Fe(II)-heme a.

This sequence belongs to the heme-copper respiratory oxidase family. Cu cation serves as cofactor. It depends on ferriheme a as a cofactor. Requires Heme A3. as cofactor.

It localises to the cell membrane. It catalyses the reaction 2 a quinol + O2 = 2 a quinone + 2 H2O. The protein operates within energy metabolism; oxidative phosphorylation. In terms of biological role, catalyzes quinol oxidation with the concomitant reduction of oxygen to water. The chain is Probable quinol oxidase subunit 1 (qoxB) from Staphylococcus haemolyticus (strain JCSC1435).